We begin with the raw amino-acid sequence, 209 residues long: Glycolipid transfer protein B (209 aa).

2 tandem repeats follow at residues 45–55 (IKADITGNITK) and 56–66 (IRSVYESNPTQ). A 2 X 12 AA approximate tandem repeats region spans residues 45–66 (IKADITGNITKIRSVYESNPTQ). Position 48 to 55 (48 to 55 (DITGNITK)) interacts with beta-D-galactosyl-(1-&gt;4)-beta-D-glucosyl-(1&lt;-&gt;1)-N-[(9Z)-octadecenoyl]-sphing-4-enine. Histidine 140 and tyrosine 207 together coordinate beta-D-galactosyl-(1-&gt;4)-beta-D-glucosyl-(1&lt;-&gt;1)-N-[(9Z)-octadecenoyl]-sphing-4-enine.

It belongs to the GLTP family.

The protein localises to the cytoplasm. Its function is as follows. Accelerates the intermembrane transfer of various glycolipids. Catalyzes the transfer of various glycosphingolipids between membranes but does not catalyze the transfer of phospholipids. May be involved in the intracellular translocation of glucosylceramides. The protein is Glycolipid transfer protein B (gltp-b) of Xenopus laevis (African clawed frog).